Consider the following 246-residue polypeptide: Pyridoxine 5'-phosphate synthase (246 aa).

N12 provides a ligand contact to 3-amino-2-oxopropyl phosphate. 14–15 (DH) contributes to the 1-deoxy-D-xylulose 5-phosphate binding site. R23 provides a ligand contact to 3-amino-2-oxopropyl phosphate. H48 functions as the Proton acceptor in the catalytic mechanism. 2 residues coordinate 1-deoxy-D-xylulose 5-phosphate: R50 and H55. Catalysis depends on E75, which acts as the Proton acceptor. Position 105 (T105) interacts with 1-deoxy-D-xylulose 5-phosphate. H196 serves as the catalytic Proton donor. 3-amino-2-oxopropyl phosphate is bound by residues G197 and 218–219 (GH).

It belongs to the PNP synthase family. As to quaternary structure, homooctamer; tetramer of dimers.

The protein localises to the cytoplasm. It catalyses the reaction 3-amino-2-oxopropyl phosphate + 1-deoxy-D-xylulose 5-phosphate = pyridoxine 5'-phosphate + phosphate + 2 H2O + H(+). It participates in cofactor biosynthesis; pyridoxine 5'-phosphate biosynthesis; pyridoxine 5'-phosphate from D-erythrose 4-phosphate: step 5/5. Functionally, catalyzes the complicated ring closure reaction between the two acyclic compounds 1-deoxy-D-xylulose-5-phosphate (DXP) and 3-amino-2-oxopropyl phosphate (1-amino-acetone-3-phosphate or AAP) to form pyridoxine 5'-phosphate (PNP) and inorganic phosphate. In Thiobacillus denitrificans (strain ATCC 25259 / T1), this protein is Pyridoxine 5'-phosphate synthase.